We begin with the raw amino-acid sequence, 369 residues long: Biotin synthase (369 aa).

The 219-residue stretch at 51–269 folds into the Radical SAM core domain; that stretch reads NYVQVSTLLS…IAVARIMMPK (219 aa). Positions 66, 70, and 73 each coordinate [4Fe-4S] cluster. Residues cysteine 110, cysteine 141, cysteine 201, and arginine 273 each coordinate [2Fe-2S] cluster.

It belongs to the radical SAM superfamily. Biotin synthase family. In terms of assembly, homodimer. Requires [4Fe-4S] cluster as cofactor. It depends on [2Fe-2S] cluster as a cofactor.

It carries out the reaction (4R,5S)-dethiobiotin + (sulfur carrier)-SH + 2 reduced [2Fe-2S]-[ferredoxin] + 2 S-adenosyl-L-methionine = (sulfur carrier)-H + biotin + 2 5'-deoxyadenosine + 2 L-methionine + 2 oxidized [2Fe-2S]-[ferredoxin]. The protein operates within cofactor biosynthesis; biotin biosynthesis; biotin from 7,8-diaminononanoate: step 2/2. Catalyzes the conversion of dethiobiotin (DTB) to biotin by the insertion of a sulfur atom into dethiobiotin via a radical-based mechanism. The polypeptide is Biotin synthase (Pseudoalteromonas atlantica (strain T6c / ATCC BAA-1087)).